A 307-amino-acid polypeptide reads, in one-letter code: Transcription factor Sox-3 (307 aa).

Residues 1–41 (MYSMLDTDLKSPVQQSNAPNGGPGTPGGKGNASIPDQERVK) form a disordered region. Gly residues predominate over residues 21-30 (GGPGTPGGKG). Positions 40–108 (VKRPMNAFMV…VHMKEYPDYK (69 aa)) form a DNA-binding region, HMG box. The 9aaTAD signature appears at 259-270 (DLRDMISMYLPP).

As to quaternary structure, interacts with ctnnb1.

Its subcellular location is the nucleus. It localises to the cytoplasm. In terms of biological role, transcription factor with sequence-specific DNA binding activity. Binds to the consensus sequence 5'-[AT][AT]CAA[AT]G-3', showing a preference for 5'-AACAAT-3' and 5'-AACAAAG-3'. Inhibits beta-catenin-mediated dorsal axis specification by binding to sites within the promoter of the beta-catenin-regulated gene nodal5. Maternally derived sox3 acts as a transcriptional repressor of nodal5 and nodal6 to restrict their expression to the vegetal hemisphere of early embryos and thus establish germ layer formation. Acts at multiple points to inhibit nodal signaling, repressing the expression of the other mesoderm-inducing nodal genes nodal, nodal2 and nodal4, and also acting downstream to induce expression of genes including trim33/ectodermin, ema and coco, whose products repress nodal signaling. The sequence is that of Transcription factor Sox-3 from Xenopus tropicalis (Western clawed frog).